The following is a 68-amino-acid chain: MIFPIRCFSCGAVISEVYEEYRTRLKDGENPEEILNDLEVKKYCCRRMFASHRLDNDRELFDDIVEYK.

Positions 7, 10, 44, and 45 each coordinate Zn(2+).

This sequence belongs to the archaeal Rpo10/eukaryotic RPB10 RNA polymerase subunit family. As to quaternary structure, part of the RNA polymerase complex. Zn(2+) is required as a cofactor.

The protein localises to the cytoplasm. The enzyme catalyses RNA(n) + a ribonucleoside 5'-triphosphate = RNA(n+1) + diphosphate. DNA-dependent RNA polymerase (RNAP) catalyzes the transcription of DNA into RNA using the four ribonucleoside triphosphates as substrates. In Methanococcus maripaludis (strain C7 / ATCC BAA-1331), this protein is DNA-directed RNA polymerase subunit Rpo10.